A 200-amino-acid polypeptide reads, in one-letter code: NADH-quinone oxidoreductase subunit C (200 aa).

The protein belongs to the complex I 30 kDa subunit family. NDH-1 is composed of 14 different subunits. Subunits NuoB, C, D, E, F, and G constitute the peripheral sector of the complex.

The protein resides in the cell inner membrane. The catalysed reaction is a quinone + NADH + 5 H(+)(in) = a quinol + NAD(+) + 4 H(+)(out). NDH-1 shuttles electrons from NADH, via FMN and iron-sulfur (Fe-S) centers, to quinones in the respiratory chain. The immediate electron acceptor for the enzyme in this species is believed to be ubiquinone. Couples the redox reaction to proton translocation (for every two electrons transferred, four hydrogen ions are translocated across the cytoplasmic membrane), and thus conserves the redox energy in a proton gradient. This Parvibaculum lavamentivorans (strain DS-1 / DSM 13023 / NCIMB 13966) protein is NADH-quinone oxidoreductase subunit C.